The primary structure comprises 392 residues: Anhydro-N-acetylmuramic acid kinase (392 aa).

ATP is bound at residue G22–D29.

This sequence belongs to the anhydro-N-acetylmuramic acid kinase family.

It catalyses the reaction 1,6-anhydro-N-acetyl-beta-muramate + ATP + H2O = N-acetyl-D-muramate 6-phosphate + ADP + H(+). It functions in the pathway amino-sugar metabolism; 1,6-anhydro-N-acetylmuramate degradation. Its pathway is cell wall biogenesis; peptidoglycan recycling. Functionally, catalyzes the specific phosphorylation of 1,6-anhydro-N-acetylmuramic acid (anhMurNAc) with the simultaneous cleavage of the 1,6-anhydro ring, generating MurNAc-6-P. Is required for the utilization of anhMurNAc either imported from the medium or derived from its own cell wall murein, and thus plays a role in cell wall recycling. This is Anhydro-N-acetylmuramic acid kinase from Burkholderia pseudomallei (strain 1106a).